The chain runs to 89 residues: Small ribosomal subunit protein uS19 (89 aa).

It belongs to the universal ribosomal protein uS19 family.

Its function is as follows. Protein S19 forms a complex with S13 that binds strongly to the 16S ribosomal RNA. This chain is Small ribosomal subunit protein uS19, found in Xylella fastidiosa (strain M23).